Here is a 273-residue protein sequence, read N- to C-terminus: MTISSNIATDFTDKQAVKVITGLNNFKIQQIKQMTQASEIAGATYLDIAADINIIEEIRSTSTIPICVSAITAEELVHCQQAGVQILEIGNYDAFYEQGRLFSSREIMEISQNTRERLPETTLCVTIPHILCIEEQIKLTQDLQNIGVDIIQTEGKSTSFSKQGDLSGIIQKSASTCSSTYAISKNSNIPIISASGISALTSPISFLYGASCIGISTNIKRLNNVASMVMYIYEIKTAIEYNRGVKKDINHSIRKSIINCQLGYYDLRMESHV.

This sequence belongs to the ycf23 family.

The protein resides in the plastid. The protein localises to the chloroplast. This is an uncharacterized protein from Pyropia yezoensis (Susabi-nori).